The chain runs to 214 residues: Adenylate kinase (214 aa).

10-15 (GAGKGT) contributes to the ATP binding site. Residues 30–59 (STGDMLRAAVKAGTPLGLEAKKVMDAGQLV) are NMP. Residues T31, R36, 57–59 (QLV), 85–88 (GFPR), and Q92 each bind AMP. The segment at 122–159 (GRRVHPGSGRVYHVVFNPPKVEGKDDVTGEDLAIRPDD) is LID. ATP-binding positions include R123 and 132-133 (VY). AMP contacts are provided by R156 and R167. Residue Q200 participates in ATP binding.

Belongs to the adenylate kinase family. In terms of assembly, monomer.

It localises to the cytoplasm. It catalyses the reaction AMP + ATP = 2 ADP. It participates in purine metabolism; AMP biosynthesis via salvage pathway; AMP from ADP: step 1/1. Catalyzes the reversible transfer of the terminal phosphate group between ATP and AMP. Plays an important role in cellular energy homeostasis and in adenine nucleotide metabolism. The chain is Adenylate kinase from Shewanella oneidensis (strain ATCC 700550 / JCM 31522 / CIP 106686 / LMG 19005 / NCIMB 14063 / MR-1).